The following is a 220-amino-acid chain: GTP-binding protein YPT53 (220 aa).

GTP-binding positions include 19-26, 67-71, and 125-128; these read GESAVGKS, DTAGQ, and NKMD. S-geranylgeranyl cysteine attachment occurs at residues Cys218 and Cys220. Cys220 is modified (cysteine methyl ester).

This sequence belongs to the small GTPase superfamily. Rab family.

It is found in the cell membrane. Its function is as follows. Required for transport in the endocytic pathway and for correct sorting of the vacuolar hydrolases suggesting a possible intersection of the endocytic with the vacuolar sorting pathway. May be involved in recruiting the MON1-CCZ1 complex to membranes enriched in phosphatidylinositol 3-phosphate (PtdIns[3]P) or other charged lipids, leading to recruitment of YPT7. The protein is GTP-binding protein YPT53 (YPT53) of Saccharomyces cerevisiae (strain ATCC 204508 / S288c) (Baker's yeast).